Consider the following 219-residue polypeptide: Redox-sensing transcriptional repressor Rex (219 aa).

Positions 17–56 form a DNA-binding region, H-T-H motif; the sequence is LYYRIFKRFHRENIVKTSSKQIAEAIGIDPATVRRDFSYF. 91–96 contributes to the NAD(+) binding site; the sequence is GVGNIG.

It belongs to the transcriptional regulatory Rex family. As to quaternary structure, homodimer.

It is found in the cytoplasm. Functionally, modulates transcription in response to changes in cellular NADH/NAD(+) redox state. In Streptococcus thermophilus (strain ATCC BAA-491 / LMD-9), this protein is Redox-sensing transcriptional repressor Rex.